The primary structure comprises 293 residues: Glycine--tRNA ligase alpha subunit (293 aa).

This sequence belongs to the class-II aminoacyl-tRNA synthetase family. Tetramer of two alpha and two beta subunits.

The protein localises to the cytoplasm. It carries out the reaction tRNA(Gly) + glycine + ATP = glycyl-tRNA(Gly) + AMP + diphosphate. The sequence is that of Glycine--tRNA ligase alpha subunit from Prochlorococcus marinus (strain MIT 9211).